The primary structure comprises 198 residues: Chromophore lyase CpcT/CpeT 3 (198 aa).

Belongs to the CpcT/CpeT biliprotein lyase family.

In terms of biological role, covalently attaches a chromophore to Cys residue(s) of phycobiliproteins. The protein is Chromophore lyase CpcT/CpeT 3 of Synechococcus sp. (strain JA-3-3Ab) (Cyanobacteria bacterium Yellowstone A-Prime).